The following is a 783-amino-acid chain: Transcription factor E4F1 (783 aa).

The segment at 40–84 (GFLGLPAPFSEEDEDDVHRCGRCQVEFTALEDFVQHKIQKTCHRA) is required for ubiquitin ligase activity. Phosphoserine is present on Ser-49. The segment at 185-264 (LLVNKEGRYV…GKSFRESGAL (80 aa)) is mediates dimerization, DNA-binding, transcription repression of CCNA2 and interaction with HMGA2. C2H2-type zinc fingers lie at residues 193–215 (YVCM…MVTH) and 221–243 (HECK…HRRH). A C2H2-type 3; degenerate zinc finger spans residues 249-273 (YKCAKCGKSFRESGALTRHLKSLTP). A mediates interaction with CDKN2A region spans residues 368–565 (NLLHQAMQNS…REKGSLVRHV (198 aa)). The interval 386–407 (GEESALEPAPPSGSSPQCLGDG) is disordered. 5 C2H2-type zinc fingers span residues 434–456 (HPCP…KRGH), 462–484 (FTCT…QEVH), 490–512 (FRCG…RRVH), 518–540 (FPCP…FRTH), and 546–568 (HVCQ…VRHH). The tract at residues 434-598 (HPCPQCSETF…LNRHLRTKGG (165 aa)) is interaction with BMI1. Residues 520–579 (CPQCGKRYKTKNAQQVHFRTHLEEKPHVCQFCSRGFREKGSLVRHVRHHTGEKPFKCYKC) are mediates interaction with TP53. The C2H2-type 9; degenerate zinc finger occupies 574 to 596 (FKCYKCGRGFAEHGTLNRHLRTK). The interval 574-596 (FKCYKCGRGFAEHGTLNRHLRTK) is mediates interaction with RASSF1.

In terms of assembly, homodimer; binds DNA as a dimer. Forms a complex with CDKN2A and TP53. Interacts with HDAC1, HMGA2 and RASSF1. Interactions with TP53, RB1, ANP32A and probably BMI1 and FHL2 regulate E4F1 activity. In terms of processing, phosphorylated; phosphorylation is cell cycle-dependent and regulates DNA-binding activity and function. Post-translationally, may be sumoylated by UBE2I upon interaction with CDKN2A. In terms of tissue distribution, ubiquitously expressed.

It localises to the nucleus. Its subcellular location is the nucleoplasm. The protein localises to the cytoplasm. The enzyme catalyses S-ubiquitinyl-[E2 ubiquitin-conjugating enzyme]-L-cysteine + [acceptor protein]-L-lysine = [E2 ubiquitin-conjugating enzyme]-L-cysteine + N(6)-ubiquitinyl-[acceptor protein]-L-lysine.. Its pathway is protein modification; protein ubiquitination. Functionally, may function as a transcriptional repressor. May also function as a ubiquitin ligase mediating ubiquitination of chromatin-associated TP53. Functions in cell survival and proliferation through control of the cell cycle. Functions in the p53 and pRB tumor suppressor pathways and regulates the cyclin CCNA2 transcription. The chain is Transcription factor E4F1 (E4f1) from Mus musculus (Mouse).